The chain runs to 555 residues: Dynein regulatory complex protein 11 (555 aa).

IQ domains lie at 154-183 (EDEA…TKRQ) and 199-226 (HEEA…ADKE). Disordered stretches follow at residues 232–255 (MKPK…MRRK), 299–377 (KRNP…EQKI), 450–469 (AAKL…EPFS), and 501–555 (AKKD…SCGA). Basic and acidic residues-rich tracts occupy residues 235 to 244 (KPRDPKRDPQ) and 338 to 367 (GDGK…KGGG). Residues 452–464 (KLGKKGKKKKGKK) are compositionally biased toward basic residues. Residues 501–521 (AKKDEKDAAGDGKGKGKDGKG) show a composition bias toward basic and acidic residues. Positions 537–546 (KKKKGGKKKS) are enriched in basic residues.

Belongs to the AAA ATPase family. DRC11 subfamily. Component of the nexin-dynein regulatory complex (N-DRC). Interacts with DRC5.

The protein localises to the cytoplasm. It localises to the cytoskeleton. Its subcellular location is the flagellum axoneme. Functionally, component of the nexin-dynein regulatory complex (N-DRC), a key regulator of ciliary/flagellar motility which maintains the alignment and integrity of the distal axoneme and regulates microtubule sliding in motile axonemes. This chain is Dynein regulatory complex protein 11, found in Chlamydomonas reinhardtii (Chlamydomonas smithii).